We begin with the raw amino-acid sequence, 73 residues long: Plasticin-A1 (73 aa).

The first 22 residues, 1-22 (MAFLKKSLFLVLFLAIVPLSIC), serve as a signal peptide directing secretion. Residues 23–42 (EEEKREEENEEKQEDDDQSE) constitute a propeptide that is removed on maturation. A disordered region spans residues 25-45 (EKREEENEEKQEDDDQSEKRG). The span at 30–40 (ENEEKQEDDDQ) shows a compositional bias: acidic residues. G70 is modified (glycine amide). Positions 72–73 (ES) are excised as a propeptide.

This sequence belongs to the frog skin active peptide (FSAP) family. Plasticin subfamily. In terms of tissue distribution, expressed by the skin glands.

Its subcellular location is the secreted. The protein resides in the target cell membrane. In terms of biological role, peptide with no antimicrobial activity. May act in synergy with cationic peptides by enhancing their activity. Has a moderate hemolytic activity. This Agalychnis annae (Blue-sided leaf frog) protein is Plasticin-A1.